A 217-amino-acid polypeptide reads, in one-letter code: Translation initiation factor IF-3 (217 aa).

This sequence belongs to the IF-3 family. As to quaternary structure, monomer.

It is found in the cytoplasm. Functionally, IF-3 binds to the 30S ribosomal subunit and shifts the equilibrium between 70S ribosomes and their 50S and 30S subunits in favor of the free subunits, thus enhancing the availability of 30S subunits on which protein synthesis initiation begins. This is Translation initiation factor IF-3 from Synechococcus sp. (strain CC9902).